Reading from the N-terminus, the 98-residue chain is NADH-ubiquinone oxidoreductase chain 4L (98 aa).

Helical transmembrane passes span 1-21 (MSMVYFNIFMAFTVSLVGLLM), 29-49 (SLLCLEGMMLSLFVLMSMTIL), and 61-81 (IILLVFAACEAALGLSLLVMV).

The protein belongs to the complex I subunit 4L family. As to quaternary structure, core subunit of respiratory chain NADH dehydrogenase (Complex I) which is composed of 45 different subunits.

The protein resides in the mitochondrion inner membrane. The enzyme catalyses a ubiquinone + NADH + 5 H(+)(in) = a ubiquinol + NAD(+) + 4 H(+)(out). Its function is as follows. Core subunit of the mitochondrial membrane respiratory chain NADH dehydrogenase (Complex I) which catalyzes electron transfer from NADH through the respiratory chain, using ubiquinone as an electron acceptor. Part of the enzyme membrane arm which is embedded in the lipid bilayer and involved in proton translocation. This chain is NADH-ubiquinone oxidoreductase chain 4L (MT-ND4L), found in Otaria byronia (South American sea lion).